The following is a 182-amino-acid chain: dTTP/UTP pyrophosphatase (182 aa).

Residue Asp64 is the Proton acceptor of the active site.

The protein belongs to the Maf family. YhdE subfamily. Requires a divalent metal cation as cofactor.

It localises to the cytoplasm. It carries out the reaction dTTP + H2O = dTMP + diphosphate + H(+). The enzyme catalyses UTP + H2O = UMP + diphosphate + H(+). Its function is as follows. Nucleoside triphosphate pyrophosphatase that hydrolyzes dTTP and UTP. May have a dual role in cell division arrest and in preventing the incorporation of modified nucleotides into cellular nucleic acids. In Thermosipho melanesiensis (strain DSM 12029 / CIP 104789 / BI429), this protein is dTTP/UTP pyrophosphatase.